Here is a 490-residue protein sequence, read N- to C-terminus: Arginine decarboxylase (490 aa).

Lys-226 carries the N6-(pyridoxal phosphate)lysine modification.

The protein belongs to the Orn/Lys/Arg decarboxylase class-I family. The cofactor is pyridoxal 5'-phosphate.

The protein resides in the cytoplasm. It catalyses the reaction L-arginine + H(+) = agmatine + CO2. Its pathway is amine and polyamine biosynthesis; agmatine biosynthesis; agmatine from L-arginine: step 1/1. Functionally, catalyzes the formation of agmatine from arginine. This chain is Arginine decarboxylase (speA), found in Bacillus subtilis (strain 168).